A 259-amino-acid polypeptide reads, in one-letter code: Global transcriptional regulator CodY (259 aa).

Residues 1–155 (MNLLEKTRKI…GATVVGMEIL (155 aa)) form a GAF domain region. The H-T-H motif DNA-binding region spans 203–222 (ASKIADRVGITRSVIVNALR). Position 215 is a phosphoserine (Ser215).

Belongs to the CodY family.

The protein localises to the cytoplasm. Its function is as follows. DNA-binding global transcriptional regulator which is involved in the adaptive response to starvation and acts by directly or indirectly controlling the expression of numerous genes in response to nutrient availability. During rapid exponential growth, CodY is highly active and represses genes whose products allow adaptation to nutrient depletion. The sequence is that of Global transcriptional regulator CodY from Lysinibacillus sphaericus (strain C3-41).